The primary structure comprises 257 residues: Zinc uptake system ATP-binding protein ZurA (257 aa).

One can recognise an ABC transporter domain in the interval 5–241 (IEVNNVSYHY…ADRELEILAE (237 aa)). 37 to 44 (GPNGSGKS) serves as a coordination point for ATP.

Belongs to the ABC transporter superfamily.

Functionally, involved in a zinc uptake transport system. This is Zinc uptake system ATP-binding protein ZurA (zurA) from Listeria monocytogenes serovar 1/2a (strain ATCC BAA-679 / EGD-e).